Here is a 527-residue protein sequence, read N- to C-terminus: GMP synthase [glutamine-hydrolyzing] (527 aa).

The Glutamine amidotransferase type-1 domain maps to 11 to 209 (RILILDFGSQ…VLNICGCENL (199 aa)). The active-site Nucleophile is the Cys-88. Residues His-183 and Glu-185 contribute to the active site. The GMPS ATP-PPase domain occupies 210-402 (WTSANIIEDA…LGLPYNMLYR (193 aa)). An ATP-binding site is contributed by 237-243 (SGGVDSS).

In terms of assembly, homodimer.

The enzyme catalyses XMP + L-glutamine + ATP + H2O = GMP + L-glutamate + AMP + diphosphate + 2 H(+). The protein operates within purine metabolism; GMP biosynthesis; GMP from XMP (L-Gln route): step 1/1. In terms of biological role, catalyzes the synthesis of GMP from XMP. This is GMP synthase [glutamine-hydrolyzing] from Photobacterium profundum (strain SS9).